Reading from the N-terminus, the 393-residue chain is S-adenosylmethionine synthase (393 aa).

Histidine 16 lines the ATP pocket. Aspartate 18 is a Mg(2+) binding site. K(+) is bound at residue glutamate 44. L-methionine-binding residues include glutamate 57 and glutamine 100. The tract at residues 100–110 is flexible loop; sequence QSPDIVMGVDG. Residues 165-167, 231-232, aspartate 240, 246-247, and lysine 267 each bind ATP; these read DAK, RF, and RK. Aspartate 240 serves as a coordination point for L-methionine. An L-methionine-binding site is contributed by lysine 271.

Belongs to the AdoMet synthase family. In terms of assembly, homotetramer; dimer of dimers. It depends on Mg(2+) as a cofactor. The cofactor is K(+).

It localises to the cytoplasm. The catalysed reaction is L-methionine + ATP + H2O = S-adenosyl-L-methionine + phosphate + diphosphate. It functions in the pathway amino-acid biosynthesis; S-adenosyl-L-methionine biosynthesis; S-adenosyl-L-methionine from L-methionine: step 1/1. Catalyzes the formation of S-adenosylmethionine (AdoMet) from methionine and ATP. The overall synthetic reaction is composed of two sequential steps, AdoMet formation and the subsequent tripolyphosphate hydrolysis which occurs prior to release of AdoMet from the enzyme. This Coxiella burnetii (strain CbuG_Q212) (Coxiella burnetii (strain Q212)) protein is S-adenosylmethionine synthase.